The primary structure comprises 281 residues: 4-diphosphocytidyl-2-C-methyl-D-erythritol kinase (281 aa).

Lys15 is an active-site residue. 98 to 108 (PTGAGLGGGSS) serves as a coordination point for ATP. Residue Asp140 is part of the active site.

It belongs to the GHMP kinase family. IspE subfamily.

The catalysed reaction is 4-CDP-2-C-methyl-D-erythritol + ATP = 4-CDP-2-C-methyl-D-erythritol 2-phosphate + ADP + H(+). It functions in the pathway isoprenoid biosynthesis; isopentenyl diphosphate biosynthesis via DXP pathway; isopentenyl diphosphate from 1-deoxy-D-xylulose 5-phosphate: step 3/6. In terms of biological role, catalyzes the phosphorylation of the position 2 hydroxy group of 4-diphosphocytidyl-2C-methyl-D-erythritol. This Neisseria meningitidis serogroup A / serotype 4A (strain DSM 15465 / Z2491) protein is 4-diphosphocytidyl-2-C-methyl-D-erythritol kinase.